The primary structure comprises 282 residues: Putative hydrolase Bcep18194_B0137 (282 aa).

Mg(2+) contacts are provided by Glu-124, Glu-126, and Asp-155.

It belongs to the FAH family. The cofactor is Mg(2+).

This chain is Putative hydrolase Bcep18194_B0137, found in Burkholderia lata (strain ATCC 17760 / DSM 23089 / LMG 22485 / NCIMB 9086 / R18194 / 383).